A 306-amino-acid polypeptide reads, in one-letter code: uncharacterized protein (306 aa).

This is an uncharacterized protein from Haemophilus influenzae (strain ATCC 51907 / DSM 11121 / KW20 / Rd).